The following is a 1066-amino-acid chain: Beta-galactosidase (1066 aa).

2 residues coordinate substrate: asparagine 110 and aspartate 209. Aspartate 209 contacts Na(+). Mg(2+) is bound by residues glutamate 432, histidine 434, and glutamate 477. Residues glutamate 477 and 553–556 (EYAH) contribute to the substrate site. The Proton donor role is filled by glutamate 477. The active-site Nucleophile is the glutamate 553. Residue asparagine 613 participates in Mg(2+) binding. Positions 617 and 620 each coordinate Na(+). Asparagine 620 and tryptophan 1041 together coordinate substrate.

Belongs to the glycosyl hydrolase 2 family. As to quaternary structure, homotetramer. Mg(2+) is required as a cofactor. It depends on Na(+) as a cofactor.

The enzyme catalyses Hydrolysis of terminal non-reducing beta-D-galactose residues in beta-D-galactosides.. The sequence is that of Beta-galactosidase from Yersinia pseudotuberculosis serotype IB (strain PB1/+).